The primary structure comprises 237 residues: tRNA (guanine-N(7)-)-methyltransferase (237 aa).

Glu56, Glu81, Asp108, and Asp131 together coordinate S-adenosyl-L-methionine. Asp131 is a catalytic residue. Residues Lys135, Asp167, and 204–207 each bind substrate; that span reads TKFE.

Belongs to the class I-like SAM-binding methyltransferase superfamily. TrmB family.

The enzyme catalyses guanosine(46) in tRNA + S-adenosyl-L-methionine = N(7)-methylguanosine(46) in tRNA + S-adenosyl-L-homocysteine. It participates in tRNA modification; N(7)-methylguanine-tRNA biosynthesis. In terms of biological role, catalyzes the formation of N(7)-methylguanine at position 46 (m7G46) in tRNA. This is tRNA (guanine-N(7)-)-methyltransferase from Legionella pneumophila (strain Paris).